The following is a 782-amino-acid chain: DNA repair and recombination protein RAD54-like (782 aa).

The span at Met-1–Asp-20 shows a compositional bias: polar residues. The interval Met-1–Lys-28 is disordered. Residues Arg-2–Gln-9 are required for chromatin remodeling, strand pairing activities and coupling of ATPase activity. A Phosphothreonine modification is found at Thr-22. One can recognise a Helicase ATP-binding domain in the interval Glu-168–Glu-343. Asp-181 to Thr-188 lines the ATP pocket. A DEGH box motif is present at residues Asp-294–His-297. The 158-residue stretch at Leu-501–Thr-658 folds into the Helicase C-terminal domain. The segment covering Ser-741–Ser-753 has biased composition (polar residues). The interval Ser-741–Phe-782 is disordered. The span at Asp-773–Phe-782 shows a compositional bias: acidic residues.

The protein belongs to the SNF2/RAD54 helicase family. Interacts (via N-terminus) with spn-A/Rad51.

The protein localises to the nucleus. Functionally, involved in mitotic DNA repair and meiotic recombination. Functions in the recombinational DNA repair pathway. Essential for interhomolog gene conversion (GC), but may have a less important role in intersister GC than spn-A/Rad51. In the presence of DNA, spn-A/Rad51 enhances the ATPase activity of okr/Rad54. The protein is DNA repair and recombination protein RAD54-like of Drosophila pseudoobscura pseudoobscura (Fruit fly).